The following is a 429-amino-acid chain: Endo-1,4-beta-xylanase 1 (429 aa).

The N-terminal stretch at 1 to 19 (MQTKSILTAALLAAAPASA) is a signal peptide. One can recognise a GH10 domain in the interval 43-336 (NSDQQYNRIL…KPAWTSISSV (294 aa)). The active-site Proton donor is E150. E257 functions as the Nucleophile in the catalytic mechanism. A disulfide bridge links C286 with C292. A disordered region spans residues 364–395 (TTPPPISSPIVPSTTTTSAVPTTTVSPPEPEQ). The span at 371 to 389 (SPIVPSTTTTSAVPTTTVS) shows a compositional bias: low complexity. Residues 393 to 429 (PEQTRWGQCGGIGWNGPTKCQSPWTCTRLNDWYFQCL) form the CBM1 domain.

Belongs to the glycosyl hydrolase 10 (cellulase F) family.

The protein localises to the secreted. It carries out the reaction Endohydrolysis of (1-&gt;4)-beta-D-xylosidic linkages in xylans.. It participates in glycan degradation; xylan degradation. Functionally, endo-1,4-beta-xylanase involved in the hydrolysis of xylan, a major structural heterogeneous polysaccharide found in plant biomass representing the second most abundant polysaccharide in the biosphere, after cellulose. This chain is Endo-1,4-beta-xylanase 1, found in Humicola insolens (Soft-rot fungus).